The following is a 173-amino-acid chain: Lens fiber membrane intrinsic protein (173 aa).

Residues 1–3 lie on the Cytoplasmic side of the membrane; the sequence is MYS. The helical transmembrane segment at 4–24 threads the bilayer; that stretch reads FMGGGLFCAWVGTILLVVAMA. Residues 25–66 are Extracellular-facing; that stretch reads TDHWMQYRLSGSFAHQGLWRYCLGNKCYLQTDSIAYWNATRA. Residues tryptophan 43 and tryptophan 61 are each glycosylated (C-linked (Man) tryptophan). Residue asparagine 62 is glycosylated (N-linked (GlcNAc...) asparagine). A helical transmembrane segment spans residues 67–87; sequence FMILSALCAISGIIMGIMAFA. Over 88 to 98 the chain is Cytoplasmic; that stretch reads HQPTFSRISRP. A helical transmembrane segment spans residues 99–119; the sequence is FSAGIMFFSSTLFVVLALAIY. The Extracellular portion of the chain corresponds to 120 to 140; that stretch reads TGVTVSFLGRRFGDWRFSWSY. A helical membrane pass occupies residues 141 to 161; it reads ILGWVAVLMTFFAGIFYMCAY. Residues 162–173 lie on the Cytoplasmic side of the membrane; that stretch reads RVHECRRLSTPR. Serine 170 carries the post-translational modification Phosphoserine. A Phosphothreonine modification is found at threonine 171.

This sequence belongs to the PMP-22/EMP/MP20 family. Seems to be associated with itself or another lens membrane component via disulfide bonds. In terms of tissue distribution, eye lens specific.

The protein resides in the membrane. In terms of biological role, present in the thicker 16-17 nm junctions of mammalian lens fiber cells, where it may contribute to cell junctional organization. Acts as a receptor for calmodulin. May play an important role in both lens development and cataractogenesis. The protein is Lens fiber membrane intrinsic protein (LIM2) of Homo sapiens (Human).